Reading from the N-terminus, the 327-residue chain is Meiotic coiled-coil protein 6 (327 aa).

A coiled-coil region spans residues aspartate 66–lysine 188. Over residues arginine 175–lysine 199 the composition is skewed to basic and acidic residues. Residues arginine 175–isoleucine 234 form a disordered region. A compositionally biased stretch (low complexity) spans serine 202–leucine 212. Polar residues predominate over residues proline 217 to serine 232. Residues asparagine 243–asparagine 297 adopt a coiled-coil conformation.

In terms of assembly, interacts with alp4, kms1 and mbo1.

The protein resides in the nucleus. It is found in the cytoplasm. It localises to the cytoskeleton. The protein localises to the microtubule organizing center. Its subcellular location is the spindle pole body. In terms of biological role, has a role in meiotic nuclear oscillation and recombination. Required to remodel astral microtubules into the 'horsetail' astral array maintaining the 'horsetail' nuclear movement. Promotes homologous paring of chromosomes during this movement. The sequence is that of Meiotic coiled-coil protein 6 (mcp6) from Schizosaccharomyces pombe (strain 972 / ATCC 24843) (Fission yeast).